The sequence spans 286 residues: Putative ribosome-inactivating protein (286 aa).

A signal peptide spans 1–21; the sequence is MNRFSVLMCLVILSIFHGVPT. N-linked (GlcNAc...) asparagine glycosylation is found at Asn-103 and Asn-110. Glu-185 is a catalytic residue. Asn-252 carries N-linked (GlcNAc...) asparagine glycosylation.

The protein belongs to the ribosome-inactivating protein family. Type 1 RIP subfamily.

The catalysed reaction is Endohydrolysis of the N-glycosidic bond at one specific adenosine on the 28S rRNA.. This chain is Putative ribosome-inactivating protein, found in Cucumis ficifolius (Cucumis figarei).